Consider the following 466-residue polypeptide: 3-isopropylmalate dehydratase large subunit (466 aa).

[4Fe-4S] cluster contacts are provided by Cys-346, Cys-406, and Cys-409.

The protein belongs to the aconitase/IPM isomerase family. LeuC type 1 subfamily. As to quaternary structure, heterodimer of LeuC and LeuD. It depends on [4Fe-4S] cluster as a cofactor.

The catalysed reaction is (2R,3S)-3-isopropylmalate = (2S)-2-isopropylmalate. It participates in amino-acid biosynthesis; L-leucine biosynthesis; L-leucine from 3-methyl-2-oxobutanoate: step 2/4. Functionally, catalyzes the isomerization between 2-isopropylmalate and 3-isopropylmalate, via the formation of 2-isopropylmaleate. The sequence is that of 3-isopropylmalate dehydratase large subunit from Cytophaga hutchinsonii (strain ATCC 33406 / DSM 1761 / CIP 103989 / NBRC 15051 / NCIMB 9469 / D465).